Reading from the N-terminus, the 189-residue chain is Ion-translocating oxidoreductase complex subunit B (189 aa).

Residues 1–26 form a hydrophobic region; sequence MSQVIIAIILLGLLALAFGALLGYAA. The 59-residue stretch at 32 to 90 folds into the 4Fe-4S domain; that stretch reads EGDPIIDQAEALLPQTQCGQCGYPGCRPYAEAIANGEKINKCPPGGTATMEKLAELMGV. [4Fe-4S] cluster-binding residues include C49, C52, C57, C73, C114, C117, C120, C124, C144, C147, C150, and C154. 2 4Fe-4S ferredoxin-type domains span residues 105-134 and 135-164; these read KVAFIREAECIGCTKCIQACPVDAILGTGK and QMHTVITDYCTGCDLCVEPCPVDCIDMIPV.

Belongs to the 4Fe4S bacterial-type ferredoxin family. RnfB subfamily. As to quaternary structure, the complex is composed of six subunits: RnfA, RnfB, RnfC, RnfD, RnfE and RnfG. [4Fe-4S] cluster serves as cofactor.

Its subcellular location is the cell inner membrane. In terms of biological role, part of a membrane-bound complex that couples electron transfer with translocation of ions across the membrane. The protein is Ion-translocating oxidoreductase complex subunit B of Shewanella loihica (strain ATCC BAA-1088 / PV-4).